Reading from the N-terminus, the 34-residue chain is Non-cysteinic peptide Bs 10 (34 aa).

The segment at 1 to 34 (VTMGYIKDGDGKKIAKKKNKNGRKHVEIDLNKVG) is disordered. Residues 14-23 (IAKKKNKNGR) are compositionally biased toward basic residues. The segment covering 24–34 (KHVEIDLNKVG) has biased composition (basic and acidic residues).

Expressed by the venom gland.

The protein resides in the secreted. In Hottentotta tamulus sindicus (Scorpion), this protein is Non-cysteinic peptide Bs 10.